Here is a 320-residue protein sequence, read N- to C-terminus: Large ribosomal subunit protein uL10y (320 aa).

The segment at 289–320 is disordered; that stretch reads AGGGAPAAAKVEEKEESDEEDYGGDFGLFDEE. Positions 302 to 320 are enriched in acidic residues; it reads KEESDEEDYGGDFGLFDEE. Serine 305 is modified (phosphoserine). Tyrosine 310 carries the phosphotyrosine modification.

The protein belongs to the universal ribosomal protein uL10 family. P0 forms a pentameric complex by interaction with dimers of P1 and P2.

In terms of biological role, ribosomal protein P0 is the functional equivalent of E.coli protein L10. This is Large ribosomal subunit protein uL10y (RPP0B) from Arabidopsis thaliana (Mouse-ear cress).